Consider the following 549-residue polypeptide: Frizzled/smoothened-like sans CRD protein A (549 aa).

The N-terminal stretch at 1-22 (MKFNFKLILIILIINQILIINC) is a signal peptide. Over 23 to 89 (KENKILEIYK…EVNTLSLMIK (67 aa)) the chain is Extracellular. N-linked (GlcNAc...) asparagine glycosylation is present at Asn63. The helical transmembrane segment at 90–110 (ITGTISFIASLILLLIYSPLI) threads the bilayer. At 111–119 (NRMGYNRHT) the chain is on the cytoplasmic side. Residues 120 to 140 (IGIFFLTFSVFLIMLTDIIYV) form a helical membrane-spanning segment. Residues 141-162 (HHGNDLICPQSHRYSRQNDSGC) are Extracellular-facing. Asn158 is a glycosylation site (N-linked (GlcNAc...) asparagine). Residues 163 to 183 (TITGILFQYGCIAAVLFWATL) traverse the membrane as a helical segment. Residues 184-198 (SLDLYLTLKKISTKK) are Cytoplasmic-facing. The chain crosses the membrane as a helical span at residues 199–219 (VEKWYLIILTLIALILTFVPL). Over 220–241 (VKKSYGYLVTGLACWILDSTDQ) the chain is Extracellular. The chain crosses the membrane as a helical span at residues 242–262 (IIFFWAPFTAILGIGSILIVL). At 263-287 (VVYEIYKISKITKQNRGIFQSHIRP) the chain is on the cytoplasmic side. The chain crosses the membrane as a helical span at residues 288-308 (LLMVLFIFGQFLFILAFNALI). The Extracellular segment spans residues 309-346 (NNKYDEYSARMDSYIDCLFSSSSYSYLCRLKTFPFEME). Residues 347–367 (FIVLFFLRLIGIEVLIFYGFT) traverse the membrane as a helical segment. The Cytoplasmic segment spans residues 368 to 549 (QQTKKILLHS…NNNSNNDENN (182 aa)). Composition is skewed to low complexity over residues 417–474 (NNNN…SQQN) and 536–549 (NKNINNNSNNDENN). Disordered regions lie at residues 417-483 (NNNN…QKLS) and 528-549 (QYEEDEINNKNINNNSNNDENN). Residues 432-475 (NNLNNNLNNNNLNNNNNLNNLNNLNINNNLKNSQNNLNNSQQNE) adopt a coiled-coil conformation.

Belongs to the G-protein coupled receptor Fz/Smo family.

The protein localises to the membrane. The polypeptide is Frizzled/smoothened-like sans CRD protein A (fscA) (Dictyostelium discoideum (Social amoeba)).